The following is a 311-amino-acid chain: Pyrimidine-specific ribonucleoside hydrolase RihA (311 aa).

H240 is a catalytic residue.

Belongs to the IUNH family. RihA subfamily.

Its function is as follows. Hydrolyzes with equal efficiency cytidine or uridine to ribose and cytosine or uracil, respectively. This Escherichia coli O8 (strain IAI1) protein is Pyrimidine-specific ribonucleoside hydrolase RihA.